The sequence spans 227 residues: Enolase-phosphatase E1 (227 aa).

Residues D11 and E13 each coordinate Mg(2+). Residues S118–S119 and K161 contribute to the substrate site. Position 186 (D186) interacts with Mg(2+).

It belongs to the HAD-like hydrolase superfamily. MasA/MtnC family. As to quaternary structure, monomer. Requires Mg(2+) as cofactor.

It is found in the cytoplasm. It localises to the nucleus. The enzyme catalyses 5-methylsulfanyl-2,3-dioxopentyl phosphate + H2O = 1,2-dihydroxy-5-(methylsulfanyl)pent-1-en-3-one + phosphate. The protein operates within amino-acid biosynthesis; L-methionine biosynthesis via salvage pathway; L-methionine from S-methyl-5-thio-alpha-D-ribose 1-phosphate: step 3/6. Its pathway is amino-acid biosynthesis; L-methionine biosynthesis via salvage pathway; L-methionine from S-methyl-5-thio-alpha-D-ribose 1-phosphate: step 4/6. In terms of biological role, bifunctional enzyme that catalyzes the enolization of 2,3-diketo-5-methylthiopentyl-1-phosphate (DK-MTP-1-P) into the intermediate 2-hydroxy-3-keto-5-methylthiopentenyl-1-phosphate (HK-MTPenyl-1-P), which is then dephosphorylated to form the acireductone 1,2-dihydroxy-3-keto-5-methylthiopentene (DHK-MTPene). The polypeptide is Enolase-phosphatase E1 (Saccharomyces cerevisiae (strain JAY291) (Baker's yeast)).